The following is an 828-amino-acid chain: Periplasmic nitrate reductase (828 aa).

The segment at residues 1–31 is a signal peptide (tat-type signal); the sequence is MKLSRRSFMKANAVAAAAAAAGLSVPGVARA. Positions 39–95 constitute a 4Fe-4S Mo/W bis-MGD-type domain; that stretch reads IKWDKAPCRFCGTGCGVLVGTQQGRVVACQGDPDAPVNRGLNCIKGYFLPKIMYGKD. Residues Cys46, Cys49, Cys53, and Cys81 each coordinate [4Fe-4S] cluster. Mo-bis(molybdopterin guanine dinucleotide) is bound by residues Lys83, Gln150, Asn175, Cys179, 212–219, 243–247, 262–264, Met372, Gln376, Asn482, 508–509, Lys531, Asp558, and 718–727; these read WGANMAEM, STYQH, QSD, SD, and TGRVLEHWHT. Phe794 is a substrate binding site. Positions 802 and 819 each coordinate Mo-bis(molybdopterin guanine dinucleotide).

Belongs to the prokaryotic molybdopterin-containing oxidoreductase family. NasA/NapA/NarB subfamily. In terms of assembly, component of the periplasmic nitrate reductase NapAB complex composed of NapA and NapB. [4Fe-4S] cluster serves as cofactor. The cofactor is Mo-bis(molybdopterin guanine dinucleotide). Post-translationally, predicted to be exported by the Tat system. The position of the signal peptide cleavage has not been experimentally proven.

It is found in the periplasm. The enzyme catalyses 2 Fe(II)-[cytochrome] + nitrate + 2 H(+) = 2 Fe(III)-[cytochrome] + nitrite + H2O. Catalytic subunit of the periplasmic nitrate reductase complex NapAB. Receives electrons from NapB and catalyzes the reduction of nitrate to nitrite. The chain is Periplasmic nitrate reductase from Escherichia coli O6:K15:H31 (strain 536 / UPEC).